The chain runs to 153 residues: Regulatory protein RecX (153 aa).

Belongs to the RecX family.

It is found in the cytoplasm. In terms of biological role, modulates RecA activity. The protein is Regulatory protein RecX of Neisseria meningitidis serogroup C / serotype 2a (strain ATCC 700532 / DSM 15464 / FAM18).